The sequence spans 417 residues: NADH-quinone oxidoreductase subunit D (417 aa).

Belongs to the complex I 49 kDa subunit family. NDH-1 is composed of 14 different subunits. Subunits NuoB, C, D, E, F, and G constitute the peripheral sector of the complex.

Its subcellular location is the cell inner membrane. It carries out the reaction a quinone + NADH + 5 H(+)(in) = a quinol + NAD(+) + 4 H(+)(out). NDH-1 shuttles electrons from NADH, via FMN and iron-sulfur (Fe-S) centers, to quinones in the respiratory chain. The immediate electron acceptor for the enzyme in this species is believed to be ubiquinone. Couples the redox reaction to proton translocation (for every two electrons transferred, four hydrogen ions are translocated across the cytoplasmic membrane), and thus conserves the redox energy in a proton gradient. The sequence is that of NADH-quinone oxidoreductase subunit D from Polynucleobacter necessarius subsp. necessarius (strain STIR1).